Consider the following 78-residue polypeptide: Putative DNA-binding protein MT0521 (78 aa).

Residues 24–45 constitute a DNA-binding region (H-T-H motif); it reads LLTVAEVAALMRVSKMTVYRLV.

In Mycobacterium tuberculosis (strain CDC 1551 / Oshkosh), this protein is Putative DNA-binding protein MT0521.